A 494-amino-acid chain; its full sequence is GDP-fucose protein O-fucosyltransferase 4 (494 aa).

Residues 1 to 7 (MAARYTE) are Cytoplasmic-facing. The helical; Signal-anchor for type II membrane protein transmembrane segment at 8–24 (AVLAALGVLSVCSASSS) threads the bilayer. At 25–494 (SGSGASGKAG…EIFMKRNKNL (470 aa)) the chain is on the lumenal side. N167 carries an N-linked (GlcNAc...) asparagine glycan. C390 and C393 are joined by a disulfide.

Belongs to the glycosyltransferase 10 family.

It localises to the endoplasmic reticulum membrane. The catalysed reaction is L-threonyl-[protein] + GDP-beta-L-fucose = 3-O-(alpha-L-fucosyl)-L-threonyl-[protein] + GDP + H(+). It carries out the reaction L-seryl-[protein] + GDP-beta-L-fucose = 3-O-(alpha-L-fucosyl)-L-seryl-[protein] + GDP + H(+). It participates in protein modification; protein glycosylation. In terms of biological role, protein O-fucosyltransferase that specifically catalyzes O-fucosylation of serine or threonine residues in EMI domains of target proteins, such as MMRN1, MMRN2 and EMID1. Attaches fucose through an O-glycosidic linkage. O-fucosylation of EMI domain-containing proteins may be required for facilitating protein folding and secretion. Also shows minor alpha-(1,3)-fucosyltransferase activity toward activity toward biantennary N-glycan acceptors. However, this was tested with a library of synthetic substrates and this activity is unsure in vivo. The polypeptide is GDP-fucose protein O-fucosyltransferase 4 (Fut11) (Rattus norvegicus (Rat)).